The sequence spans 332 residues: tRNA N6-adenosine threonylcarbamoyltransferase (332 aa).

2 residues coordinate Fe cation: His108 and His112. Residues 129–133, Asp161, Glu178, and Ser258 contribute to the substrate site; that span reads LISGG. Residue Asp286 participates in Fe cation binding.

This sequence belongs to the KAE1 / TsaD family. Fe(2+) serves as cofactor.

The protein localises to the cytoplasm. The catalysed reaction is L-threonylcarbamoyladenylate + adenosine(37) in tRNA = N(6)-L-threonylcarbamoyladenosine(37) in tRNA + AMP + H(+). Required for the formation of a threonylcarbamoyl group on adenosine at position 37 (t(6)A37) in tRNAs that read codons beginning with adenine. Is probably involved in the transfer of the threonylcarbamoyl moiety of threonylcarbamoyl-AMP (TC-AMP) to the N6 group of A37. The polypeptide is tRNA N6-adenosine threonylcarbamoyltransferase (Pyrobaculum arsenaticum (strain DSM 13514 / JCM 11321 / PZ6)).